The sequence spans 500 residues: Lysine--tRNA ligase (500 aa).

The Mg(2+) site is built by Glu411 and Glu418.

The protein belongs to the class-II aminoacyl-tRNA synthetase family. In terms of assembly, homodimer. It depends on Mg(2+) as a cofactor.

Its subcellular location is the cytoplasm. The catalysed reaction is tRNA(Lys) + L-lysine + ATP = L-lysyl-tRNA(Lys) + AMP + diphosphate. The chain is Lysine--tRNA ligase from Actinobacillus pleuropneumoniae serotype 7 (strain AP76).